The following is a 527-amino-acid chain: PTS system maltose-specific EIICB component (527 aa).

One can recognise a PTS EIIC type-1 domain in the interval 1-418 (MMQKIQRFGS…FNIATPGREK (418 aa)). Transmembrane regions (helical) follow at residues 8-28 (FGSA…IVGI), 59-79 (GWTV…VALA), 93-113 (VYLT…GAFG), 132-152 (IKTL…VVFL), 173-193 (YIVM…SYIW), 200-220 (IGSL…IYTF), 224-244 (ILIP…GPAV), 276-296 (FALH…AFYV), 305-325 (LVAG…ITEP), 326-346 (IEFT…VLAA), 357-377 (VVGN…IPLF), and 382-402 (MTYV…FFVF). The 79-residue stretch at 449-527 (DDTAFLYIEA…RERVEKILNQ (79 aa)) folds into the PTS EIIB type-1 domain. The Phosphocysteine intermediate; for EIIB activity role is filled by Cys471.

It is found in the cell membrane. It carries out the reaction D-maltose(out) + N(pros)-phospho-L-histidyl-[protein] = alpha-maltose 6'-phosphate(in) + L-histidyl-[protein]. Functionally, the phosphoenolpyruvate-dependent sugar phosphotransferase system (sugar PTS), a major carbohydrate active transport system, catalyzes the phosphorylation of incoming sugar substrates concomitantly with their translocation across the cell membrane. This system is involved in maltose transport. The sequence is that of PTS system maltose-specific EIICB component from Bacillus subtilis (strain 168).